Consider the following 323-residue polypeptide: Methenyltetrahydromethanopterin cyclohydrolase (323 aa).

Belongs to the MCH family.

Its subcellular location is the cytoplasm. It carries out the reaction 5,10-methenyl-5,6,7,8-tetrahydromethanopterin + H2O = N(5)-formyl-5,6,7,8-tetrahydromethanopterin + H(+). The protein operates within one-carbon metabolism; methanogenesis from CO(2); 5,10-methenyl-5,6,7,8-tetrahydromethanopterin from CO(2): step 3/3. Catalyzes the reversible interconversion of 5-formyl-H(4)MPT to methenyl-H(4)MPT(+). In Methanococcus maripaludis (strain DSM 14266 / JCM 13030 / NBRC 101832 / S2 / LL), this protein is Methenyltetrahydromethanopterin cyclohydrolase.